The following is a 444-amino-acid chain: C4-dicarboxylate transport protein 3 (444 aa).

A run of 9 helical transmembrane segments spans residues 22–42, 60–80, 95–115, 162–182, 198–218, 236–256, 321–341, 346–366, and 399–419; these read VLYV…WLWP, LIKM…IAHI, VYFE…GNLV, GEIL…MSLG, AVFG…FGAM, LIAT…GIIA, IYMT…LSFG, ILVV…AGFI, and LTNL…EGEL.

Belongs to the dicarboxylate/amino acid:cation symporter (DAACS) (TC 2.A.23) family.

Its subcellular location is the cell inner membrane. Its function is as follows. Responsible for the transport of dicarboxylates such as succinate, fumarate, and malate from the periplasm across the membrane. This chain is C4-dicarboxylate transport protein 3, found in Bradyrhizobium diazoefficiens (strain JCM 10833 / BCRC 13528 / IAM 13628 / NBRC 14792 / USDA 110).